The primary structure comprises 581 residues: Glutamyl-tRNA reductase (581 aa).

Substrate-binding positions include 49-52 (TCNR), Ser-109, 114-116 (EGQ), and Gln-120. Cys-50 acts as the Nucleophile in catalysis. Residue 192–197 (GAGSMS) participates in NADP(+) binding. An insert region spans residues 292-416 (PAVEDTAVQE…AEAPRPQPVL (125 aa)).

This sequence belongs to the glutamyl-tRNA reductase family. In terms of assembly, homodimer.

The enzyme catalyses (S)-4-amino-5-oxopentanoate + tRNA(Glu) + NADP(+) = L-glutamyl-tRNA(Glu) + NADPH + H(+). The protein operates within porphyrin-containing compound metabolism; protoporphyrin-IX biosynthesis; 5-aminolevulinate from L-glutamyl-tRNA(Glu): step 1/2. Functionally, catalyzes the NADPH-dependent reduction of glutamyl-tRNA(Glu) to glutamate 1-semialdehyde (GSA). The polypeptide is Glutamyl-tRNA reductase (Streptomyces coelicolor (strain ATCC BAA-471 / A3(2) / M145)).